We begin with the raw amino-acid sequence, 200 residues long: Pyridoxine/pyridoxamine 5'-phosphate oxidase (200 aa).

FMN-binding positions include 48-53 (RMVLLK), 63-64 (YT), Lys-70, and Gln-92. Lys-53 is a binding site for substrate. The substrate site is built by Tyr-110, Arg-114, and Ser-118. Residues 127–128 (QS) and Trp-171 each bind FMN. 177–179 (RLH) contributes to the substrate binding site. Arg-181 is a binding site for FMN.

The protein belongs to the pyridoxamine 5'-phosphate oxidase family. In terms of assembly, homodimer. Requires FMN as cofactor.

The enzyme catalyses pyridoxamine 5'-phosphate + O2 + H2O = pyridoxal 5'-phosphate + H2O2 + NH4(+). The catalysed reaction is pyridoxine 5'-phosphate + O2 = pyridoxal 5'-phosphate + H2O2. It participates in cofactor metabolism; pyridoxal 5'-phosphate salvage; pyridoxal 5'-phosphate from pyridoxamine 5'-phosphate: step 1/1. It functions in the pathway cofactor metabolism; pyridoxal 5'-phosphate salvage; pyridoxal 5'-phosphate from pyridoxine 5'-phosphate: step 1/1. Functionally, catalyzes the oxidation of either pyridoxine 5'-phosphate (PNP) or pyridoxamine 5'-phosphate (PMP) into pyridoxal 5'-phosphate (PLP). This is Pyridoxine/pyridoxamine 5'-phosphate oxidase from Cereibacter sphaeroides (strain ATCC 17023 / DSM 158 / JCM 6121 / CCUG 31486 / LMG 2827 / NBRC 12203 / NCIMB 8253 / ATH 2.4.1.) (Rhodobacter sphaeroides).